A 2021-amino-acid chain; its full sequence is MSSLAQQLQSIASLDAARLTSAYGAPSGKSYLFPPDVASSHDIDSIFDLAQSGFDELLSLDPEMEEFEEELFSESAKRTDRMVLSKEENDNLDRTLGRCLRRLGKWIRLMAGGKCIEWMVRRFRVHEMNVDEVLRSFLPYHESPNFPRILAIVTIPKTSPYYATFAPLVKDAQPIPRSYIVTSISPAKDKSLVLLGDIASMVQQAVKEGVVHHALLTFWTATMVDLLEGARHGKGANEGVVKQLVESFVTLLETPKAGEDVNAAVYPPLVLLTRTVPLADEPFLAIVSSLLTPGTGSNPSQRMLTLLVILNDRHTWSLGLGEHATENLAKVSQLGEILVAAMDKYRFEKALNIVVKSMLEKPDLHAKALATVLEHESLPTSVTELASTNLLQLGSSTDSQEVKAACKSLLTNLRERHPSIVDTAFLQASASLEIDTHPVDHGLVQKPSGEVAFLDVYAADISSRVTGVKSVIDMAKKGEEIESSITALEARLSDVDENVVNALYEEPKSLLEILPVEKYIAGVKPVFWAVSPISHIIGLHLDFISQHLLVSHPEAGKQIYESLLFPIFLSTEKRQPLTKSQALKLLNGGFKKLDKLSTIGPEIGKAREEGMKGAQKGNLVIAKALAGATLSSSTFEDDISFLIAQLDSTTSSARLLAYLILHSLVLTLRGPRQLSTSLSILKYLSPRLTGHSLRDLKHADENVNTEYMESVYKKPEETRTTLRAIVSILAAMGKVIKPIGQIVWLSGESKAKDASYKTFAQQIYLWANIAILPANVAHFLLRSLLTQLGEEALLFFSSIWTSSTSPVPLRISALKHALAFIHAYATLPTSPAAQGQPVDFQVVLPQILIALQDSDKDVRRVAVDVLRSVEGGEGMGDVYALDTIYGDRSEMTQLLKSVDRKKYIETLLEVAEEFVIDRLRLKAFHTEVLNMQSGKNRKESAHRRAIIGFLMSHVASYRAIDPRLVLLSLLSDVHDTSILRSAIPLLASLFDDKSEESLWLSSLPDGQQALYVQALMGSLRVQSVSVLGEAGGEGWEFLLNLLDASKSSRFIARLRILSFKAMVGGVFSALEAHQQIEYIIALIQCIHALPTDDALDAVKVLEKLDIQPRVLIELIEHLSDPLETSVNRKRQRQDAADEDRPTQAVHELITFVDSRNWPSIPASAPLVASLMSILSALLAKRLIVKEGIDYLEQEVFGAILALVERITDAQEIQRAHVGIEVVIKVIRASTNPRTAQRALLVASELARLIPDAVLHNVMPIFTFMGASDFQRDDAYTFGVVEKTVSRIVPVMTQSLKEKAQNSLELYTKSLTFLSIFTDMAGRLPRHRTLPFFVHLVKSLGASDYLAPVCMLLVDRATTKAGRNKESVSTALELPANLVAAFDVSVKTQVLGEIVQELARLIGDLSKADKEAFLSQTISENDATDRPLRQVTYLLSFLSSILGQLRGKACSQALVQSAVRQLIVLAASTSQPVMATTDIPSNLHKTLASTMLLLSADNFLGVTAELLSDGSEQDIIMSLGVFAERLPLIKSEVRLRCTKVIAEILKRIGGLLAASGATVNAALEAVKSVIKTAIAQEDGALASVLPTVVGCIGKVKDSAVIVAALSLVELLVRRLAARTIPFIQSILDTSLNLIKSTKLAATATNQAFVTLSSVIETIPTFISSKQLNAILITTIDYRRVEETNSASLFTTLAKKIRTKSLFPVLIEAWKTVQEKGGDNEMKGFFEMLRLTLKNAAREDLPSMLKPVFAFFLDVFDLRHRLQLKGVDTRVVNDVEESAIGSFLELVTKLNEPTFKPLFIRLYDWAVIDLAEGKNADDGRLTERKIVLLHVMMGLLTKFKNLLSPYMGILFPHIQELLPAFASGSVRSEPLWTLLLNVLGKSFEVDSGAFWTDALEIELLPQLVAQVPLFLPIAPSPQSPRPISSCLANLAGSTTAENVLRRLNTAVCLATRSDDPKVRLAALDALSAIWDAQAEEMVGLVPETVSEFLAELLEDESKDVEIAARGVLAKIEKVTGSLKEYLE.

HEAT repeat units lie at residues proline 837–methionine 875, threonine 976–alanine 1014, glutamate 1281–methionine 1319, glutamate 1935–glutamate 1973, and glycine 1977–serine 2015.

This sequence belongs to the HEATR1/UTP10 family. Component of the ribosomal small subunit (SSU) processome.

It localises to the nucleus. Its subcellular location is the nucleolus. Its function is as follows. Involved in nucleolar processing of pre-18S ribosomal RNA. Involved in ribosome biosynthesis. The polypeptide is U3 small nucleolar RNA-associated protein 10 (UTP10) (Cryptococcus neoformans var. neoformans serotype D (strain B-3501A) (Filobasidiella neoformans)).